Here is a 565-residue protein sequence, read N- to C-terminus: NAD-dependent malic enzyme (565 aa).

The active-site Proton donor is the tyrosine 104. Arginine 157 contributes to the NAD(+) binding site. The Proton acceptor role is filled by lysine 175. A divalent metal cation-binding residues include glutamate 246, aspartate 247, and aspartate 270. Positions 270 and 418 each coordinate NAD(+).

This sequence belongs to the malic enzymes family. As to quaternary structure, homotetramer. It depends on Mg(2+) as a cofactor. Mn(2+) is required as a cofactor.

It carries out the reaction (S)-malate + NAD(+) = pyruvate + CO2 + NADH. It catalyses the reaction oxaloacetate + H(+) = pyruvate + CO2. In Escherichia coli O9:H4 (strain HS), this protein is NAD-dependent malic enzyme.